The following is a 1026-amino-acid chain: Vacuolar protein sorting-associated protein 18 homolog (1026 aa).

Residues 858-896 (IVDFLKRNKQRLEKLERSMKEATEIASEIRDKQEKLKNR) are a coiled coil. Residues 906 to 932 (CSHCARPISGRAFNVHSCRHFFHRECL) form an RING-type; degenerate zinc finger.

Probable core component of at least two putative endosomal tethering complexes, the homotypic fusion and vacuole protein sorting (HOPS) complex and the class C core vacuole/endosome tethering (CORVET) complex. Their common core is composed of the class C Vps proteins vps-11, vps-16 and vps-18, which in HOPS further associates with vps-33.1, vps-39 and vps-41 and in CORVET with vps-8 and vps-33.2. In terms of tissue distribution, in hermaphrodites, expressed in coelomocytes and gonadal sheath cells.

It is found in the cytoplasm. The protein resides in the late endosome membrane. The protein localises to the lysosome membrane. Its subcellular location is the early endosome. It localises to the cytoplasmic vesicle. It is found in the autophagosome. The protein resides in the clathrin-coated vesicle. Plays a role in vesicle-mediated protein trafficking to lysosomal compartments including the endocytic membrane transport and autophagic pathways. Believed to act as a core component of the putative HOPS and CORVET endosomal tethering complexes which are proposed to be involved in the rab-5-to-rab-7 endosome conversion probably implicating sand-1, and via binding SNAREs and SNARE complexes to mediate tethering and docking events during SNARE-mediated membrane fusion. The HOPS complex is proposed to be recruited to rab-7 on the late endosomal membrane and to regulate late endocytic, phagocytic and autophagic traffic towards lysosomes. Within the HOPS complex, contributes to the normal development of gut granules in intestinal cells of the embryo, and also promotes the trafficking of embryonic intestinal gut granules away from lysosomes. The CORVET complex is proposed to function as a rab-5 effector to mediate early endosome fusion probably in specific endosome subpopulations. Required for fusion of endosomes and autophagosomes with lysosomes. Plays a role in the degradation of apoptotic cells during programmed cell death. In Caenorhabditis elegans, this protein is Vacuolar protein sorting-associated protein 18 homolog.